The primary structure comprises 388 residues: Flavin-dependent monooxygenase (388 aa).

FAD-binding positions include 12 to 15, 34 to 36, 44 to 47, R105, Y267, D289, and 296 to 302; these read VGVA, EKS, QALD, and PLSGQGN.

The protein belongs to the aromatic-ring hydroxylase family. It depends on FAD as a cofactor.

The catalysed reaction is a tetracycline + NADPH + O2 + H(+) = a (1S,10aS)-3-(CONH2)-1-(Me2N)-3,3a,4,6-(HO)4-2,5-dioxo-1H,10aH,11H,11aH-cyclopenta[b]anthracene + CO + NADP(+) + H2O. It catalyses the reaction 7-chlorotetracycline + NADPH + O2 + H(+) = (1S,10S,10aS)-3-(CONH2)-9-Cl-1-(Me2N)-3,3a,4,10-(HO)4-10-Me-2,5-dioxo-1H,10aH,11H,11aH-cyclopenta[b]anthracen-6-olate + CO + NADP(+) + H2O. With respect to regulation, inhibited by anhydrotetracycline. An FAD-requiring monooxygenase active on tetracycline antibiotic and some of its derivatives, which leads to their inactivation. Expression in E.coli confers high resistance to tetracycline and oxytetracycline, does not confer resistance to minocycline or tigecycline. Degrades tetracycline and oxytetracycline; the reaction requires NADPH. Degrades and confers resistance to chlortetracycline. This is Flavin-dependent monooxygenase (tet(50)) from Unknown prokaryotic organism.